A 186-amino-acid polypeptide reads, in one-letter code: GTP cyclohydrolase 1 (186 aa).

Positions 78, 81, and 150 each coordinate Zn(2+).

The protein belongs to the GTP cyclohydrolase I family. Toroid-shaped homodecamer, composed of two pentamers of five dimers.

It catalyses the reaction GTP + H2O = 7,8-dihydroneopterin 3'-triphosphate + formate + H(+). The protein operates within cofactor biosynthesis; 7,8-dihydroneopterin triphosphate biosynthesis; 7,8-dihydroneopterin triphosphate from GTP: step 1/1. The protein is GTP cyclohydrolase 1 of Enterococcus faecalis (strain ATCC 700802 / V583).